The chain runs to 1783 residues: Trans-splicing factor Raa3, chloroplastic (1783 aa).

A chloroplast-targeting transit peptide spans 1–40; sequence MKADLATAKGSSPAFSAPRTYRARLLSRCLNKCFNTVLVS. Disordered stretches follow at residues 97-378, 420-484, 563-610, 652-709, 918-971, 1395-1427, 1476-1506, and 1620-1639; these read ATTH…VGVN, ATSA…VAAQ, ARVG…SATK, STEP…SPAA, AAPT…QRAS, RDAKRHVRQSAAAAAAAAAAAQDQRQEQHQQHQ, PAPAHMQQQPQSSGTGCQKSRRRRMRYRRSR, and VKGRGRGRRTAARATTDVQG. Positions 105-118 are enriched in gly residues; sequence DSGGQGPAAAGGRG. Low complexity-rich tracts occupy residues 126 to 157, 186 to 205, and 224 to 242; these read QAAASAATTVSAAPQTGATKPAATAKTTPQRP, AVDAASDAAPDVAAASPAPA, and AGKPRASGRAPAAPGVGPQ. The span at 256–273 shows a compositional bias: basic and acidic residues; it reads DESHMGLTHRDQGHDERI. A compositionally biased stretch (low complexity) spans 277–289; that stretch reads AGEAWKAGAVAAP. A compositionally biased stretch (polar residues) spans 307–316; that stretch reads LASSALGTHS. Composition is skewed to low complexity over residues 343–374, 420–436, 577–599, 655–669, 676–709, 928–970, and 1403–1417; these read SGSSSSSSGRNSSSNSNTSTSSTSNGVTITSN, ATSAASSSTSSASSSSS, RPVQGQSGQVPQVGQGPVQSQPG, PLAASAPTTSLASAS, SSSNAHSSAAASEAAAGTVRAPTDTAAPAASPAA, SAAA…PQRA, and QSAAAAAAAAAAAQD. Composition is skewed to basic residues over residues 1494 to 1506 and 1620 to 1630; these read KSRRRRMRYRRSR and VKGRGRGRRTA. Positions 1713–1772 constitute an RAP domain; it reads LAVGAAAGGAVIRNSRWLLSGAGALRRRLLTHAGWLVVPVRERQWKDLRSAEQQRRVVRE.

Part of a 1700 kDa complex that includes the precursor RNA to exon 1 and the tscA RNA.

The protein resides in the plastid. The protein localises to the chloroplast stroma. Functionally, required for trans-splicing of exons 1 and 2 of the chloroplast encoded psaA mRNA (a group II intron). May be required for stability of the chloroplast RNA-protein complex in which it is found. The protein is Trans-splicing factor Raa3, chloroplastic (RAA3) of Chlamydomonas reinhardtii (Chlamydomonas smithii).